Consider the following 311-residue polypeptide: Probable manganese-dependent inorganic pyrophosphatase (311 aa).

Mn(2+) is bound by residues His-9, Asp-13, Asp-15, Asp-77, His-99, and Asp-151.

The protein belongs to the PPase class C family. The cofactor is Mn(2+).

Its subcellular location is the cytoplasm. It carries out the reaction diphosphate + H2O = 2 phosphate + H(+). The sequence is that of Probable manganese-dependent inorganic pyrophosphatase from Streptococcus agalactiae serotype III (strain NEM316).